The sequence spans 601 residues: NADH-ubiquinone oxidoreductase chain 5 (601 aa).

17 helical membrane-spanning segments follow: residues 5–25 (ITSL…TLSF), 37–54 (YMRN…IYID), 83–105 (YCLT…SLWY), 112–129 (TLFF…LFFL), 134–156 (LLQL…NWWH), 169–189 (IIYN…SALF), 209–231 (WLPL…LHPW), 240–260 (TPVS…FLLI), 271–291 (MIIS…ALCA), 300–320 (IIAF…GINQ), 323–343 (LAFL…LCSA), 363–383 (LILP…MGMP), 400–420 (MSYV…LTSI), 451–471 (PLIR…TFFL), 478–498 (FSIP…VSSL), 508–528 (FSHM…AIFH), and 581–601 (NYIT…ALYF).

It belongs to the complex I subunit 5 family.

Its subcellular location is the mitochondrion inner membrane. It carries out the reaction a ubiquinone + NADH + 5 H(+)(in) = a ubiquinol + NAD(+) + 4 H(+)(out). In terms of biological role, core subunit of the mitochondrial membrane respiratory chain NADH dehydrogenase (Complex I) that is believed to belong to the minimal assembly required for catalysis. Complex I functions in the transfer of electrons from NADH to the respiratory chain. The immediate electron acceptor for the enzyme is believed to be ubiquinone. The chain is NADH-ubiquinone oxidoreductase chain 5 (MT-ND5) from Myxine glutinosa (Atlantic hagfish).